A 414-amino-acid chain; its full sequence is Gamma-glutamyl phosphate reductase (414 aa).

It belongs to the gamma-glutamyl phosphate reductase family.

It is found in the cytoplasm. The catalysed reaction is L-glutamate 5-semialdehyde + phosphate + NADP(+) = L-glutamyl 5-phosphate + NADPH + H(+). The protein operates within amino-acid biosynthesis; L-proline biosynthesis; L-glutamate 5-semialdehyde from L-glutamate: step 2/2. Catalyzes the NADPH-dependent reduction of L-glutamate 5-phosphate into L-glutamate 5-semialdehyde and phosphate. The product spontaneously undergoes cyclization to form 1-pyrroline-5-carboxylate. The polypeptide is Gamma-glutamyl phosphate reductase (Xanthomonas campestris pv. campestris (strain 8004)).